The sequence spans 435 residues: Evolutionarily conserved signaling intermediate in Toll pathway, mitochondrial (435 aa).

Residues 1–48 constitute a mitochondrion transit peptide; sequence MSWVQVNLLVRSLSRGWGGLCRPALSGTPFAQVSLQALRGLHCSAATH. Lysine 372 is covalently cross-linked (Glycyl lysine isopeptide (Lys-Gly) (interchain with G-Cter in ubiquitin)). Residues 401 to 435 are disordered; the sequence is LTTSRLEGQSPPHSPPKGPEEDDETIQAEQQQGQS.

This sequence belongs to the ECSIT family. Interacts with MAP3K1, SMAD4 and TRAF6. Interacts with SMAD1 only after BMP4-treatment. Part of the mitochondrial complex I assembly/MCIA complex that comprises at least the core subunits TMEM126B, NDUFAF1, ECSIT and ACAD9 and complement subunits such as COA1 and TMEM186. Interacts with NDUFAF1. Interacts with ACAD9. Interacts with TRIM59. Interacts with TMEM70 and TMEM242. Interacts (when ubiquitinated) with NF-kappa-B subunits RELA and NFKB1. Interacts with RIGI, IFIT1 and MAVS; these interactions promote RLR-mediated type I IFN induction. Interacts with SQSTM1; this interaction inhibits TLR4 signaling via functional regulation of the TRAF6-ECSIT complex. Interacts with cereblon/CRBN; this interaction inhibits the ubiquitination of ECSIT. Post-translationally, ubiquitinated on Lys-372; leading to translocation in the nucleus together with RELA and NFKB1 and expression of NF-kappa-B-dependent genes. Detected in heart, brain, lung, liver, skeletal muscle, kidney and testis. Detected in embryonic mesoderm and epiblast, and in extraembryonic ectoderm.

The protein localises to the cytoplasm. It localises to the nucleus. It is found in the mitochondrion. Functionally, adapter protein that plays a role in different signaling pathways including TLRs and IL-1 pathways or innate antiviral induction signaling. Plays a role in the activation of NF-kappa-B by forming a signal complex with TRAF6 and TAK1/MAP3K7 to activate TAK1/MAP3K7 leading to activation of IKKs. Once ubiquitinated, interacts with the dissociated RELA and NFKB1 proteins and translocates to the nucleus where it induces NF-kappa-B-dependent gene expression. Plays a role in innate antiviral immune response by bridging the pattern recognition receptors RIGI and MDA5/IFIT1 to the MAVS complex at the mitochondrion. Promotes proteolytic activation of MAP3K1. Involved in the BMP signaling pathway. Required for normal embryonic development. In terms of biological role, as part of the MCIA complex, involved in the assembly of the mitochondrial complex I. This chain is Evolutionarily conserved signaling intermediate in Toll pathway, mitochondrial, found in Mus musculus (Mouse).